An 83-amino-acid chain; its full sequence is Small ribosomal subunit protein bS20 (83 aa).

The protein belongs to the bacterial ribosomal protein bS20 family.

In terms of biological role, binds directly to 16S ribosomal RNA. This chain is Small ribosomal subunit protein bS20, found in Flavobacterium psychrophilum (strain ATCC 49511 / DSM 21280 / CIP 103535 / JIP02/86).